The chain runs to 481 residues: UDP-glycosyltransferase 72B3 (481 aa).

UDP-alpha-D-glucose is bound by residues Ser277, 347–349 (APQ), 364–372 (HCGWNSSLE), and 386–389 (YAEQ).

This sequence belongs to the UDP-glycosyltransferase family.

Functionally, possesses low quercetin 3-O-glucosyltransferase activity in vitro. This chain is UDP-glycosyltransferase 72B3 (UGT72B3), found in Arabidopsis thaliana (Mouse-ear cress).